A 126-amino-acid polypeptide reads, in one-letter code: Holo-[acyl-carrier-protein] synthase (126 aa).

Mg(2+)-binding residues include Asp-9 and Glu-58.

This sequence belongs to the P-Pant transferase superfamily. AcpS family. Mg(2+) serves as cofactor.

It is found in the cytoplasm. The catalysed reaction is apo-[ACP] + CoA = holo-[ACP] + adenosine 3',5'-bisphosphate + H(+). Transfers the 4'-phosphopantetheine moiety from coenzyme A to a Ser of acyl-carrier-protein. The protein is Holo-[acyl-carrier-protein] synthase of Salmonella paratyphi B (strain ATCC BAA-1250 / SPB7).